The chain runs to 911 residues: DNA polymerase I (911 aa).

The region spanning 186 to 280 (VTPAQYPDLA…DTLRLQPWDR (95 aa)) is the 5'-3' exonuclease domain. The 3'-5' exonuclease domain maps to 320–497 (RGGLLESGTV…LAAALDAELD (178 aa)).

It belongs to the DNA polymerase type-A family. In terms of assembly, single-chain monomer with multiple functions.

The catalysed reaction is DNA(n) + a 2'-deoxyribonucleoside 5'-triphosphate = DNA(n+1) + diphosphate. Functionally, in addition to polymerase activity, this DNA polymerase exhibits 3'-5' and 5'-3' exonuclease activity. The chain is DNA polymerase I (polA) from Mycobacterium leprae (strain TN).